Reading from the N-terminus, the 494-residue chain is GPI alpha-1,6-mannosyltransferase 2 (494 aa).

Residues 1–13 are Cytoplasmic-facing; that stretch reads MWSLDPSQKEVLR. The helical transmembrane segment at 14–34 threads the bilayer; that stretch reads FAVSCRILTLMLQALFNIIIP. Topologically, residues 35–77 are lumenal; the sequence is DHHADAFSPPRLASSCSVDQLVEGLLGGLSRWDAEHFLFIAEH. The helical transmembrane segment at 78–98 threads the bilayer; it reads GYLYEHNFAFFPGFPLALLMG. Topologically, residues 99–113 are cytoplasmic; sequence TELLRPLQGLLSQRS. Residues 114–134 traverse the membrane as a helical segment; it reads CLLVSVALLNFLFSVLAAVTL. Topologically, residues 135–136 are lumenal; it reads HD. Residues 137-157 traverse the membrane as a helical segment; it reads LGCLVLGCPRQAFYAAMLFCL. At 158–161 the chain is on the cytoplasmic side; the sequence is SPAN. Residues 162 to 182 form a helical membrane-spanning segment; that stretch reads VFLAAGYSEALFAFLTFSAMG. Residues 183–192 are Lumenal-facing; that stretch reads QLERGRSWAS. The chain crosses the membrane as a helical span at residues 193 to 213; the sequence is GLLFALATGVRSNGLVSVGFL. Residues 214 to 234 lie on the Cytoplasmic side of the membrane; sequence LHAQCRGFFSSLVVLNPLKPL. A helical membrane pass occupies residues 235-255; sequence FKLMASLCLSVLTVSLPFALF. At 256-327 the chain is on the lumenal side; that stretch reads QYYAYTQFCL…RYYELRQVPN (72 aa). Residues 328 to 348 traverse the membrane as a helical segment; sequence FLLATPVAVLVVWAAWTYVTT. Residues 349 to 379 are Cytoplasmic-facing; sequence HPWLCLTLGLRRSKDSKKTLEKPHPGFLSPK. The chain crosses the membrane as a helical span at residues 380–400; it reads VFVYLVHAAGLLLFGSLCMHV. Topologically, residues 401–470 are lumenal; it reads QVLTRLLCSS…NWRACSPVTR (70 aa). The helical transmembrane segment at 471–491 threads the bilayer; that stretch reads CILGYFLTYWLLGLLLHCNFL. The Cytoplasmic segment spans residues 492–494; the sequence is PWT.

The protein belongs to the PIGV family. Not N-glycosylated.

It localises to the endoplasmic reticulum membrane. It participates in glycolipid biosynthesis; glycosylphosphatidylinositol-anchor biosynthesis. Alpha-1,6-mannosyltransferase that catalyzes the transfer of the second mannose, via an alpha-1,6 bond, from a dolichol-phosphate-mannose (Dol-P-Man) to the alpha-D-Man-(1-&gt;4)-alpha-D-GlcN-(1-&gt;6)-(1-radyl,2-acyl-sn-glycero-3-phospho)-2-acyl-inositol intermediate to generate an alpha-D-Man-(1-&gt;6)-alpha-D-Man-(1-&gt;4)-alpha-D-GlcN-(1-&gt;6)-(1-radyl,2-acyl-sn-glycero-3-phospho)-2-acyl-inositol and participates in the seventh step of the glycosylphosphatidylinositol-anchor biosynthesis. Also transfers the second mannose on a 2-PEtn-alpha-D-Man-(1-&gt;4)-alpha-D-GlcN-(1-&gt;6)-(1-radyl,2-acyl-sn-glycero-3-phospho)-2-acyl-inositol. This is GPI alpha-1,6-mannosyltransferase 2 from Cricetulus griseus (Chinese hamster).